A 211-amino-acid chain; its full sequence is C-type lectin domain family 2 member L (211 aa).

Positions 1-53 are disordered; the sequence is MEPAREPPARARPPPPAARPAPAAPRPRSPAEAEARGPEGLLRRSGSGYEGST. Pro residues predominate over residues 10–28; that stretch reads RARPPPPAARPAPAAPRPR. The residue at position 29 (Ser29) is a Phosphoserine. Residues 66–86 traverse the membrane as a helical segment; it reads LLLGAIAVLLFAILVVMSILA. Intrachain disulfides connect Cys97–Cys108, Cys125–Cys205, and Cys184–Cys197. The 103-residue stretch at 104–206 folds into the C-type lectin domain; sequence YGRKCYYFSE…CLTTRPWVCS (103 aa).

It is found in the membrane. The sequence is that of C-type lectin domain family 2 member L (Clec2l) from Rattus norvegicus (Rat).